Here is a 155-residue protein sequence, read N- to C-terminus: Large ribosomal subunit protein uL13 (155 aa).

It belongs to the universal ribosomal protein uL13 family. Part of the 50S ribosomal subunit.

In terms of biological role, this protein is one of the early assembly proteins of the 50S ribosomal subunit, although it is not seen to bind rRNA by itself. It is important during the early stages of 50S assembly. In Rickettsia bellii (strain OSU 85-389), this protein is Large ribosomal subunit protein uL13.